The primary structure comprises 395 residues: E3 ubiquitin-protein ligase RNFT1 (395 aa).

Disordered regions lie at residues 1 to 58 and 78 to 97; these read MQAS…SSRN and YSHS…GEHG. The next 6 membrane-spanning stretches (helical) occupy residues 118-138, 165-185, 193-213, 216-236, 258-278, and 283-303; these read ILIL…LGIG, CAWL…TFHS, IFLN…IVGI, FILK…PSFI, IFVP…FGNV, and LGIL…FGHL. The interval 328–379 is required for ubiquitin ligase activity and for protection against ER stress-induced cell death; the sequence is CSDMDGICTICQAEFQKPVLLFCQHIFCEECITLWFNREKTCPLCRTVISEC. The segment at 335-373 adopts an RING-type zinc-finger fold; sequence CTICQAEFQKPVLLFCQHIFCEECITLWFNREKTCPLCR.

As to expression, predominantly expressed in testis.

It is found in the early endosome membrane. The enzyme catalyses S-ubiquitinyl-[E2 ubiquitin-conjugating enzyme]-L-cysteine + [acceptor protein]-L-lysine = [E2 ubiquitin-conjugating enzyme]-L-cysteine + N(6)-ubiquitinyl-[acceptor protein]-L-lysine.. It participates in protein modification; protein ubiquitination. E3 ubiquitin-protein ligase that acts in the endoplasmic reticulum (ER)-associated degradation (ERAD) pathway, which targets misfolded proteins that accumulate in the endoplasmic reticulum (ER) for ubiquitination and subsequent proteasome-mediated degradation. Protects cells from ER stress-induced apoptosis. This Mus musculus (Mouse) protein is E3 ubiquitin-protein ligase RNFT1 (Rnft1).